Here is a 492-residue protein sequence, read N- to C-terminus: Serine/threonine-protein kinase 3 (492 aa).

The Protein kinase domain occupies 26-277 (FDVLEKLGEG…ATQLLQHPFI (252 aa)). Residues 32-40 (LGEGSYGSV) and Lys-55 each bind ATP. The Proton acceptor role is filled by Asp-145. A Phosphothreonine; by autocatalysis modification is found at Thr-179. Coiled coils occupy residues 286–328 (LRDL…TMVK) and 443–476 (NLDF…AKRQ). Residues 297–307 (KAKRQQEQQRE) are compositionally biased toward basic and acidic residues. Residues 297 to 339 (KAKRQQEQQRELEEDDENSEEEVEVDSHTMVKSGSESAGTMRA) form a disordered region. Positions 308-320 (LEEDDENSEEEVE) are enriched in acidic residues. Polar residues predominate over residues 326–339 (MVKSGSESAGTMRA). In terms of domain architecture, SARAH spans 438 to 485 (FDFLKNLDFEELQMRLTALDPMMEREIEELRQRYTAKRQPILDAMDAK).

The protein belongs to the protein kinase superfamily. STE Ser/Thr protein kinase family. STE20 subfamily. In terms of assembly, homodimer; mediated via the coiled-coil region. Requires Mg(2+) as cofactor.

The protein resides in the cytoplasm. The protein localises to the nucleus. It catalyses the reaction L-seryl-[protein] + ATP = O-phospho-L-seryl-[protein] + ADP + H(+). The enzyme catalyses L-threonyl-[protein] + ATP = O-phospho-L-threonyl-[protein] + ADP + H(+). Its activity is regulated as follows. Inhibited by the C-terminal non-catalytic region. Activated by caspase-cleavage. Full activation also requires homodimerization and autophosphorylation of Thr-179. Functionally, stress-activated, pro-apoptotic kinase which, following caspase-cleavage, enters the nucleus and induces chromatin condensation followed by internucleosomal DNA fragmentation. Key component of the Hippo signaling pathway which plays a pivotal role in organ size control and tumor suppression by restricting proliferation and promoting apoptosis. The core of this pathway is composed of a kinase cascade wherein stk3/mst2 and stk4/mst1, in complex with its regulatory protein sav1, phosphorylates and activates lats1/2 in complex with its regulatory protein mob1, which in turn phosphorylates and inactivates yap1 oncoprotein and wwtr1/taz. Phosphorylation of yap1 by lats2 inhibits its translocation into the nucleus to regulate cellular genes important for cell proliferation, cell death, and cell migration. The sequence is that of Serine/threonine-protein kinase 3 (stk3) from Danio rerio (Zebrafish).